Here is a 423-residue protein sequence, read N- to C-terminus: Histidine--tRNA ligase (423 aa).

It belongs to the class-II aminoacyl-tRNA synthetase family. Homodimer.

The protein localises to the cytoplasm. It catalyses the reaction tRNA(His) + L-histidine + ATP = L-histidyl-tRNA(His) + AMP + diphosphate + H(+). The chain is Histidine--tRNA ligase from Staphylococcus haemolyticus (strain JCSC1435).